A 103-amino-acid polypeptide reads, in one-letter code: ATP-dependent Clp protease adapter protein ClpS (103 aa).

The protein belongs to the ClpS family. In terms of assembly, binds to the N-terminal domain of the chaperone ClpA.

Its function is as follows. Involved in the modulation of the specificity of the ClpAP-mediated ATP-dependent protein degradation. The sequence is that of ATP-dependent Clp protease adapter protein ClpS from Neisseria meningitidis serogroup A / serotype 4A (strain DSM 15465 / Z2491).